Consider the following 98-residue polypeptide: NADH-ubiquinone oxidoreductase chain 4L (98 aa).

A run of 3 helical transmembrane segments spans residues 1 to 21, 29 to 49, and 61 to 81; these read MSMVYANIFMAFVVSLMGMLV, SLLCLEGMMLSLFVMMSVTIL, and IILLVFAACEAALGLSLLVMV.

Belongs to the complex I subunit 4L family. Core subunit of respiratory chain NADH dehydrogenase (Complex I) which is composed of 45 different subunits.

The protein resides in the mitochondrion inner membrane. It catalyses the reaction a ubiquinone + NADH + 5 H(+)(in) = a ubiquinol + NAD(+) + 4 H(+)(out). Its function is as follows. Core subunit of the mitochondrial membrane respiratory chain NADH dehydrogenase (Complex I) which catalyzes electron transfer from NADH through the respiratory chain, using ubiquinone as an electron acceptor. Part of the enzyme membrane arm which is embedded in the lipid bilayer and involved in proton translocation. In Odobenus rosmarus rosmarus (Atlantic walrus), this protein is NADH-ubiquinone oxidoreductase chain 4L (MT-ND4L).